Consider the following 468-residue polypeptide: Beta-monoglucosyldiacylglycerol synthase (468 aa).

4 consecutive transmembrane segments (helical) span residues 51–71 (AALV…VSWG), 72–92 (SIFI…VVFA), 358–378 (MLMF…DLLM), and 387–407 (MLGP…FAGL).

It belongs to the glycosyltransferase 2 family. The cofactor is Mg(2+).

The protein resides in the membrane. The enzyme catalyses a 1,2-diacyl-sn-glycerol + UDP-alpha-D-glucose = a 1,2-diacyl-3-O-(beta-D-glucopyranosyl)-sn-glycerol + UDP + H(+). In terms of biological role, glucosyltransferase involved in the biosynthesis of the non-bilayer-forming membrane lipid beta-monoglucosyldiacylglycerol which contributes to regulate the properties and stability of the membrane. Catalyzes the transfer of a glucosyl residue from UDP-Glc to diacylglycerol (DAG) acceptor to form the corresponding beta-glucosyl-DAG (1,2-diacyl-3-O-(beta-D-glucopyranosyl)-sn-glycerol). It can only use UDP-Glc as sugar donor. Two types of DAG (dipalmitoyl-DAG (DPDAG) and 1-oleoyl-2-palmitoyl-DAG (OPDAG)) can be used as sugar acceptors, but OPDAG is preferred. The polypeptide is Beta-monoglucosyldiacylglycerol synthase (Nostoc sp. (strain PCC 7120 / SAG 25.82 / UTEX 2576)).